We begin with the raw amino-acid sequence, 437 residues long: O-acetyl-L-homoserine sulfhydrylase (437 aa).

An N6-(pyridoxal phosphate)lysine modification is found at lysine 216.

The protein belongs to the trans-sulfuration enzymes family. As to quaternary structure, homohexamer. Pyridoxal 5'-phosphate is required as a cofactor.

The catalysed reaction is O-acetyl-L-homoserine + hydrogen sulfide = L-homocysteine + acetate. The enzyme catalyses O-acetyl-L-homoserine + methanethiol = L-methionine + acetate + H(+). Its pathway is amino-acid biosynthesis; L-methionine biosynthesis via de novo pathway; L-homocysteine from O-acetyl-L-homoserine: step 1/1. Inhibited by methionine and cystathionine. Functionally, catalyzes the conversion of O-acetyl-L-homoserine (OAH) into homocysteine in the methionine biosynthesis pathway. Can also use dimethyldisulfide and methanethiol as reduced sulfur sources, leading to the direct formation of methionine. Has weak cystathionine gamma-synthase activity. The sequence is that of O-acetyl-L-homoserine sulfhydrylase from Corynebacterium glutamicum (strain ATCC 13032 / DSM 20300 / JCM 1318 / BCRC 11384 / CCUG 27702 / LMG 3730 / NBRC 12168 / NCIMB 10025 / NRRL B-2784 / 534).